Reading from the N-terminus, the 446-residue chain is Exodeoxyribonuclease 7 large subunit (446 aa).

The protein belongs to the XseA family. Heterooligomer composed of large and small subunits.

Its subcellular location is the cytoplasm. The enzyme catalyses Exonucleolytic cleavage in either 5'- to 3'- or 3'- to 5'-direction to yield nucleoside 5'-phosphates.. Bidirectionally degrades single-stranded DNA into large acid-insoluble oligonucleotides, which are then degraded further into small acid-soluble oligonucleotides. The polypeptide is Exodeoxyribonuclease 7 large subunit (Streptococcus thermophilus (strain CNRZ 1066)).